The following is a 475-amino-acid chain: Ribulose bisphosphate carboxylase large chain (475 aa).

Positions 1–2 are excised as a propeptide; it reads MA. Pro-3 carries the N-acetylproline modification. Lys-14 bears the N6,N6,N6-trimethyllysine mark. Asn-123 and Thr-173 together coordinate substrate. Lys-175 serves as the catalytic Proton acceptor. Lys-177 is a binding site for substrate. The Mg(2+) site is built by Lys-201, Asp-203, and Glu-204. An N6-carboxylysine modification is found at Lys-201. The active-site Proton acceptor is His-294. Substrate-binding residues include Arg-295, His-327, and Ser-379.

The protein belongs to the RuBisCO large chain family. Type I subfamily. In terms of assembly, heterohexadecamer of 8 large chains and 8 small chains. Mg(2+) serves as cofactor.

It localises to the plastid. The protein localises to the chloroplast. The catalysed reaction is 2 (2R)-3-phosphoglycerate + 2 H(+) = D-ribulose 1,5-bisphosphate + CO2 + H2O. The enzyme catalyses D-ribulose 1,5-bisphosphate + O2 = 2-phosphoglycolate + (2R)-3-phosphoglycerate + 2 H(+). In terms of biological role, ruBisCO catalyzes two reactions: the carboxylation of D-ribulose 1,5-bisphosphate, the primary event in carbon dioxide fixation, as well as the oxidative fragmentation of the pentose substrate in the photorespiration process. Both reactions occur simultaneously and in competition at the same active site. The protein is Ribulose bisphosphate carboxylase large chain of Nephroselmis olivacea (Green alga).